The primary structure comprises 546 residues: uncharacterized protein (546 aa).

The next 5 membrane-spanning stretches (helical) occupy residues 4–23 (ILLENPLLVLFLVAAIGYPL), 30–47 (GSSLGVAAVLFVGLAMGS), 57–79 (IVYVLGLALFVYTIGLSSGPAFV), 91–113 (ALIIGMLLVAAGLVVGAQRLLGF), and 155–177 (PVVGYSVAYPMGVMGVVLAISLV). 2 consecutive RCK C-terminal domains span residues 189 to 274 (GKRL…FLGE) and 275 to 359 (VSEE…FFGD). The next 6 helical transmembrane spans lie at 372–394 (FSLGLALGLLLGIIPIPLPGGIT), 399–421 (FAGGPLIVALILGTIGRSGSMVW), 434–456 (IGLVLFLAGVGTRAGYGFVTTLA), 460–482 (GLAIFAAGAVVTCLTALATLWIG), 489–511 (PMSILIGMVAGLQTQPAVLGYAL), and 521–543 (IGYASVYPVATISKILIVQILLT).

This sequence belongs to the AAE transporter (TC 2.A.81) family.

The protein localises to the cell membrane. This is an uncharacterized protein from Geobacter sulfurreducens (strain ATCC 51573 / DSM 12127 / PCA).